The following is a 259-amino-acid chain: Imidazole glycerol phosphate synthase subunit HisF (259 aa).

Active-site residues include Asp11 and Asp130.

Belongs to the HisA/HisF family. As to quaternary structure, heterodimer of HisH and HisF.

The protein resides in the cytoplasm. The enzyme catalyses 5-[(5-phospho-1-deoxy-D-ribulos-1-ylimino)methylamino]-1-(5-phospho-beta-D-ribosyl)imidazole-4-carboxamide + L-glutamine = D-erythro-1-(imidazol-4-yl)glycerol 3-phosphate + 5-amino-1-(5-phospho-beta-D-ribosyl)imidazole-4-carboxamide + L-glutamate + H(+). It functions in the pathway amino-acid biosynthesis; L-histidine biosynthesis; L-histidine from 5-phospho-alpha-D-ribose 1-diphosphate: step 5/9. In terms of biological role, IGPS catalyzes the conversion of PRFAR and glutamine to IGP, AICAR and glutamate. The HisF subunit catalyzes the cyclization activity that produces IGP and AICAR from PRFAR using the ammonia provided by the HisH subunit. This chain is Imidazole glycerol phosphate synthase subunit HisF, found in Syntrophobacter fumaroxidans (strain DSM 10017 / MPOB).